The primary structure comprises 496 residues: uncharacterized protein (496 aa).

13 helical membrane-spanning segments follow: residues 5–25 (LTAL…GFLA), 45–65 (FGGL…YTFL), 77–97 (VAFF…FFLP), 127–147 (LVAI…LSGI), 161–181 (VKFV…FSGI), 193–213 (ILVW…HFNG), 239–259 (IPWF…WAHA), 278–298 (FLPL…IAFL), 325–345 (FAYA…AIGA), 374–394 (MVFV…TALV), 396–416 (LQLL…VSLF), 424–444 (ATVI…ITQS), and 450–470 (EGFW…PLFV).

It belongs to the sodium:solute symporter (SSF) (TC 2.A.21) family.

Its subcellular location is the cell membrane. This is an uncharacterized protein from Bacillus subtilis (strain 168).